The following is a 259-amino-acid chain: uncharacterized protein (259 aa).

Positions 82-128 form a coiled coil; it reads NSGMAETIEEKREDFQKEEKEDFTEEQNIEDLLAAVADAEGRYQTNQ. The tract at residues 192 to 259 is disordered; it reads LIQTQNQHPR…SSSRNSSTTS (68 aa). Over residues 228 to 240 the composition is skewed to basic residues; that stretch reads KKVHARSRKRRKT. Residues 241–259 are compositionally biased toward low complexity; sequence SSSSSSSSSSSSRNSSTTS.

This is an uncharacterized protein from Homo sapiens (Human).